We begin with the raw amino-acid sequence, 553 residues long: Putative transport protein YidE (553 aa).

5 helical membrane-spanning segments follow: residues 4–24 (IALTVSILALVAVVGLFIGNV), 28–48 (GIGLGIGGVLFGGIIVGHFVS), 65–85 (FGLILFVYTIGIQVGPGFFAS), 95–115 (LFAVLIVIIGGLVTAILHKLF), and 158–178 (MSYAMAYPFGICGILFTMWML). RCK C-terminal domains lie at 191-276 (QQHE…VIGQ) and 279-361 (DTSL…VLGN). A run of 6 helical transmembrane segments spans residues 371-391 (MLPVFIGIGLGVLLGSIPVFV), 393-413 (GFPAALKLGLAGGPLIMALIL), 439-459 (IVLFLSIVGLKSGGDFVNTLV), 464-484 (LSWIGYGALITAVPLITVGIL), 493-513 (YLTMCGMLAGSMTDPPALAFA), and 533-553 (LVMFLRIITPQLLAVLFWSIG).

The protein belongs to the AAE transporter (TC 2.A.81) family. YidE subfamily.

It localises to the cell membrane. This Shigella flexneri serotype 5b (strain 8401) protein is Putative transport protein YidE.